Reading from the N-terminus, the 384-residue chain is MPENYTPAAAATGTWTEEEIRHQPRAWIRSLTNIDALRSALNNFLEPLLRKENLRIILTGAGTSAFIGDIIAPWLASHTGKNFSAVPTTDLVTNPMDYLNPAHPLLLISFGRSGNSPESVAAVELANQFVPECYHLPITCNEAGALYQNAINSDNAFALLMPAETHDRGFAMTSSITTMMASCLAVFAPETINSQTFRDVADRCQAILTTLGDFSEGVFGYAPWKRIVYLGSGGLQGAARESALKVLELTAGKLAAFYDSPTGFRHGPKSLVDDETLVVVFVSSHPYTRQYDLDLLAELRRDNQAMRVIAIAAESSDIVAAGPHIILPPSRHFIDVEQAFCFLMYAQTFALMQSLHMGNTPDTPSASGTVNRVVQGVIIHPWQA.

SIS domains follow at residues 45 to 197 (LEPL…SQTF) and 215 to 364 (SEGV…PDTP).

The protein belongs to the SIS family. AgaS subfamily.

It catalyses the reaction D-galactosamine 6-phosphate + H2O = D-tagatopyranose 1-phosphate + NH4(+). In terms of biological role, catalyzes the isomerization-deamination of galactosamine 6-phosphate to form tagatofuranose 6-phosphate and ammonium ion. The polypeptide is D-galactosamine-6-phosphate deaminase AgaS (Escherichia coli).